A 234-amino-acid chain; its full sequence is Small ribosomal subunit protein uS2 (234 aa).

Belongs to the universal ribosomal protein uS2 family.

This Prochlorococcus marinus (strain AS9601) protein is Small ribosomal subunit protein uS2.